A 402-amino-acid polypeptide reads, in one-letter code: MKEKVVLAYSGGLDTSITIHWLKENYNLDVIACCVNVGQDEDFDEIKKKAIKSGATKIYVEDVKDEFVSEYIYKGVKANAVYEGKYLLGTSFARPLIAKKLVEVAHKEGAKYICHGCTGKGNDQVRFEVGIMSLDPSIKVIAPWRIWNIKSREDAVDYANANGIEVPVTKEKIYSRDQNLWHISHEGGDLENIRNEHKTDMYCMTVPPEKAKDEVSYIKITFEKGEAKKLDDVEMSPVEILEKLNKIGGENGIGVIDLLENRLVGMKSRGVYETPGGTILYAAHKELEYLTMQKETFHFKQMVSQKYGELVYNGLWFSTLKESLDAFIDKTQEVVNGTVRLKLYKGNIMVAGMESPNALYEESISSFGASDFYDHKDAEGFINLFGLPYKINAMIQLKNQEN.

8-16 serves as a coordination point for ATP; that stretch reads AYSGGLDTS. 2 residues coordinate L-citrulline: Y86 and S91. G116 is an ATP binding site. T118, N122, and D123 together coordinate L-aspartate. N122 lines the L-citrulline pocket. Residues R126, S175, S184, E260, and Y272 each coordinate L-citrulline.

This sequence belongs to the argininosuccinate synthase family. Type 1 subfamily. As to quaternary structure, homotetramer.

It is found in the cytoplasm. It carries out the reaction L-citrulline + L-aspartate + ATP = 2-(N(omega)-L-arginino)succinate + AMP + diphosphate + H(+). It participates in amino-acid biosynthesis; L-arginine biosynthesis; L-arginine from L-ornithine and carbamoyl phosphate: step 2/3. The chain is Argininosuccinate synthase from Clostridium novyi (strain NT).